Reading from the N-terminus, the 288-residue chain is Acetyl-coenzyme A carboxylase carboxyl transferase subunit beta (288 aa).

Residues 34 to 288 (LFAKCPACKH…HLVAFHGGVS (255 aa)) form the CoA carboxyltransferase N-terminal domain. Residues Cys-38, Cys-41, Cys-56, and Cys-59 each contribute to the Zn(2+) site. The segment at 38-59 (CPACKHMIYQKDLGPAKICPTC) adopts a C4-type zinc-finger fold.

The protein belongs to the AccD/PCCB family. Acetyl-CoA carboxylase is a heterohexamer composed of biotin carboxyl carrier protein (AccB), biotin carboxylase (AccC) and two subunits each of ACCase subunit alpha (AccA) and ACCase subunit beta (AccD). Zn(2+) is required as a cofactor.

Its subcellular location is the cytoplasm. It carries out the reaction N(6)-carboxybiotinyl-L-lysyl-[protein] + acetyl-CoA = N(6)-biotinyl-L-lysyl-[protein] + malonyl-CoA. The protein operates within lipid metabolism; malonyl-CoA biosynthesis; malonyl-CoA from acetyl-CoA: step 1/1. In terms of biological role, component of the acetyl coenzyme A carboxylase (ACC) complex. Biotin carboxylase (BC) catalyzes the carboxylation of biotin on its carrier protein (BCCP) and then the CO(2) group is transferred by the transcarboxylase to acetyl-CoA to form malonyl-CoA. This is Acetyl-coenzyme A carboxylase carboxyl transferase subunit beta from Streptococcus equi subsp. equi (strain 4047).